We begin with the raw amino-acid sequence, 200 residues long: Transgelin (200 aa).

N-acetylalanine is present on A2. One can recognise a Calponin-homology (CH) domain in the interval 24–137; it reads DELEDRLVEW…RTLVALGSLA (114 aa). A Calponin-like repeat occupies 175-199; the sequence is IGLQMGTNKGASQAGMSYGRPRQII.

This sequence belongs to the calponin family. As to quaternary structure, monomer. As to expression, gizzard, uterus, intestine, esophagus, aorta, and trace amounts in brain, liver and heart.

Its subcellular location is the cytoplasm. Its function is as follows. Actin cross-linking/gelling protein. This chain is Transgelin (TAGLN), found in Gallus gallus (Chicken).